Here is a 642-residue protein sequence, read N- to C-terminus: MGLGQSTEQAGHSPEQLSHVLAERFATKCFTPLELTHFKDNFFSRAIDQEGIKYWSEKILSDFLGIPDSSDSHCPLDAGPVLFRMVSYLGAFPFQNTMAPSVLTFEAMVKVVVLLTERYGKVLRRARRDRVKLLFGSLADVGRRGAGQPPDENADNKEEDKSSTAKSHATGFAVDDPANDNYEDDEDDDDLVLAALESLDAIDVFKHDSRVDKTVYEARISVATFRRLLMLLIVIAPLSSLEPVKKYTSDLNEERMDNVRQEADSILAAFDLNKSADGISFQSFSEIVSGSLPYLFDPLTTLFEHLLFSKNLDLSQKRGGTETTIVADTAEEVSESPLSSPSSIMLPGSFESTILKPSAISHLSFFLSSPATDVNLLRGNMRLHPVFSTVAHGSSLTSFSHNVLTWNSGTLLLLEGAVTESSDRGVGTITLGAYLPQHWKSGPLAHSPSRPFDSLSLPCLFELSPKHLLMQGNTSPSVHKPNAPSAYFSTNTGIAIGCQIPPPSRSQQFEPTPLGAGSLIIDASLESATFYASPIGHNGVFLPSPSVSKNGSETTSKMQIDIYTLEVWGLVPDPSDETLTEPGHNAIERQRARWDFEAREAERRRSLNLKAGAGDSAMEGARWLLETAGLIGDRPGRSGGSM.

The interval 143–186 is disordered; that stretch reads RRGAGQPPDENADNKEEDKSSTAKSHATGFAVDDPANDNYEDDE. The segment covering 154-163 has biased composition (basic and acidic residues); it reads ADNKEEDKSS. Over residues 177-186 the composition is skewed to acidic residues; it reads PANDNYEDDE. A TLDc domain is found at 353 to 571; that stretch reads TILKPSAISH…IYTLEVWGLV (219 aa).

This sequence belongs to the RTC5 family.

It localises to the cytoplasm. In terms of biological role, may be involved in a process influencing telomere capping. This is Restriction of telomere capping protein 5 (rtc5) from Aspergillus clavatus (strain ATCC 1007 / CBS 513.65 / DSM 816 / NCTC 3887 / NRRL 1 / QM 1276 / 107).